Reading from the N-terminus, the 308-residue chain is Olfactory receptor 2T6 (308 aa).

The Extracellular segment spans residues 1–28 (MNENNETLTRGFTLMGLFTHNKCSGFFF). The N-linked (GlcNAc...) asparagine glycan is linked to Asn5. Residues 29–49 (GVICAVFFMAMIANGVMIFLI) form a helical membrane-spanning segment. At 50–57 (NIDPHLHT) the chain is on the cytoplasmic side. Residues 58–78 (PMYFLLSHLSVIDTLYISTIV) traverse the membrane as a helical segment. The Extracellular segment spans residues 79-98 (PKMLVDYLMGEGTISFIACT). A disulfide bridge connects residues Cys97 and Cys179. A helical transmembrane segment spans residues 99–119 (AQCFLYMGFMGAEFFLLGLMA). Residues 120–145 (YDRYVAICNPLRYPVLISWRVCWMIL) lie on the Cytoplasmic side of the membrane. A helical membrane pass occupies residues 146–166 (ASSWFGGALDSFLLTPITMSL). The Extracellular segment spans residues 167–203 (PFCASHQINHFFCEAPTMLRLACGDKTTYETVMYVCC). A helical transmembrane segment spans residues 204–224 (VAMLLIPFSVVTASYTRILIT). Residues 225–236 (VHQMTSAEGRKK) are Cytoplasmic-facing. A helical membrane pass occupies residues 237–257 (AFATCSSHMMVVTLFYGAALY). The Extracellular portion of the chain corresponds to 258–271 (TYTLPQSYHTPIKD). A helical membrane pass occupies residues 272–292 (KVFSAFYTILTPLLNPLIYSL). The Cytoplasmic portion of the chain corresponds to 293–308 (RNRDVMGALKRVVARC).

This sequence belongs to the G-protein coupled receptor 1 family.

It is found in the cell membrane. Functionally, odorant receptor. This is Olfactory receptor 2T6 (OR2T6) from Homo sapiens (Human).